The primary structure comprises 72 residues: ATP synthase subunit c (72 aa).

2 helical membrane passes run Met-1–Ile-21 and Met-48–Ile-68.

The protein belongs to the ATPase C chain family. F-type ATPases have 2 components, F(1) - the catalytic core - and F(0) - the membrane proton channel. F(1) has five subunits: alpha(3), beta(3), gamma(1), delta(1), epsilon(1). F(0) has three main subunits: a(1), b(2) and c(10-14). The alpha and beta chains form an alternating ring which encloses part of the gamma chain. F(1) is attached to F(0) by a central stalk formed by the gamma and epsilon chains, while a peripheral stalk is formed by the delta and b chains.

The protein resides in the cell membrane. Functionally, f(1)F(0) ATP synthase produces ATP from ADP in the presence of a proton or sodium gradient. F-type ATPases consist of two structural domains, F(1) containing the extramembraneous catalytic core and F(0) containing the membrane proton channel, linked together by a central stalk and a peripheral stalk. During catalysis, ATP synthesis in the catalytic domain of F(1) is coupled via a rotary mechanism of the central stalk subunits to proton translocation. In terms of biological role, key component of the F(0) channel; it plays a direct role in translocation across the membrane. A homomeric c-ring of between 10-14 subunits forms the central stalk rotor element with the F(1) delta and epsilon subunits. In Bacillus caldotenax, this protein is ATP synthase subunit c.